The primary structure comprises 313 residues: Homoserine kinase (313 aa).

Residue 92–102 participates in ATP binding; the sequence is PPGRGLGSSGA.

It belongs to the GHMP kinase family. Homoserine kinase subfamily.

The protein localises to the cytoplasm. It carries out the reaction L-homoserine + ATP = O-phospho-L-homoserine + ADP + H(+). Its pathway is amino-acid biosynthesis; L-threonine biosynthesis; L-threonine from L-aspartate: step 4/5. Functionally, catalyzes the ATP-dependent phosphorylation of L-homoserine to L-homoserine phosphate. The chain is Homoserine kinase from Aeropyrum pernix (strain ATCC 700893 / DSM 11879 / JCM 9820 / NBRC 100138 / K1).